The chain runs to 339 residues: Dihydroorotate dehydrogenase (quinone) (339 aa).

FMN contacts are provided by residues 64 to 68 and Thr88; that span reads AGADK. Lys68 is a substrate binding site. Residue 113 to 117 coordinates substrate; that stretch reads NRNGF. The FMN site is built by Asn141 and Asn174. Asn174 contributes to the substrate binding site. The active-site Nucleophile is Ser177. Asn179 serves as a coordination point for substrate. FMN contacts are provided by Lys219 and Thr247. Residue 248 to 249 participates in substrate binding; that stretch reads NT. Residues Gly270, Gly299, and 320 to 321 each bind FMN; that span reads YS.

This sequence belongs to the dihydroorotate dehydrogenase family. Type 2 subfamily. Monomer. FMN serves as cofactor.

The protein localises to the cell membrane. The enzyme catalyses (S)-dihydroorotate + a quinone = orotate + a quinol. Its pathway is pyrimidine metabolism; UMP biosynthesis via de novo pathway; orotate from (S)-dihydroorotate (quinone route): step 1/1. Catalyzes the conversion of dihydroorotate to orotate with quinone as electron acceptor. The sequence is that of Dihydroorotate dehydrogenase (quinone) (pyrD) from Haemophilus influenzae (strain ATCC 51907 / DSM 11121 / KW20 / Rd).